Here is a 263-residue protein sequence, read N- to C-terminus: Pimeloyl-[acyl-carrier protein] methyl ester esterase (263 aa).

Substrate-binding positions include Trp23, Ser90 to Leu91, and Phe152 to Gln156. Catalysis depends on Ser90, which acts as the Nucleophile. Catalysis depends on residues Asp216 and His244. Position 244 (His244) interacts with substrate.

The protein belongs to the AB hydrolase superfamily. Carboxylesterase BioH family. As to quaternary structure, monomer.

Its subcellular location is the cytoplasm. It catalyses the reaction 6-carboxyhexanoyl-[ACP] methyl ester + H2O = 6-carboxyhexanoyl-[ACP] + methanol + H(+). The protein operates within cofactor biosynthesis; biotin biosynthesis. In terms of biological role, the physiological role of BioH is to remove the methyl group introduced by BioC when the pimeloyl moiety is complete. It allows to synthesize pimeloyl-ACP via the fatty acid synthetic pathway through the hydrolysis of the ester bonds of pimeloyl-ACP esters. In Nitrosospira multiformis (strain ATCC 25196 / NCIMB 11849 / C 71), this protein is Pimeloyl-[acyl-carrier protein] methyl ester esterase.